A 107-amino-acid polypeptide reads, in one-letter code: uncharacterized protein (107 aa).

It is found in the mitochondrion. This is an uncharacterized protein from Arabidopsis thaliana (Mouse-ear cress).